Here is a 345-residue protein sequence, read N- to C-terminus: UPF0228 protein MA_2656 (345 aa).

It belongs to the UPF0228 family.

In Methanosarcina acetivorans (strain ATCC 35395 / DSM 2834 / JCM 12185 / C2A), this protein is UPF0228 protein MA_2656.